We begin with the raw amino-acid sequence, 770 residues long: Glutamate carboxypeptidase 2 homolog (770 aa).

At 1–25 (MPYVGVGAQTVSTSLTGAPMVKAYI) the chain is on the cytoplasmic side. The helical; Signal-anchor for type II membrane protein transmembrane segment at 26 to 42 (AIAASLIFVFCIAALGV) threads the bilayer. The Extracellular portion of the chain corresponds to 43–770 (HHSERKFNKF…CVVNTLRDVI (728 aa)). N-linked (GlcNAc...) asparagine glycans are attached at residues Asn-175 and Asn-337. The tract at residues 282–597 (SKKELFKGRT…QYWAELAKTF (316 aa)) is catalytic. The Zn(2+) site is built by His-387 and Asp-397. Asn-417 is a glycosylation site (N-linked (GlcNAc...) asparagine). Glu-435 serves as the catalytic Nucleophile. Zn(2+)-binding residues include Glu-436 and Asp-464. N-linked (GlcNAc...) asparagine glycosylation is found at Asn-469, Asn-546, and Asn-551. His-562 contributes to the Zn(2+) binding site. Asn-579, Asn-606, and Asn-630 each carry an N-linked (GlcNAc...) asparagine glycan.

This sequence belongs to the peptidase M28 family. M28B subfamily. Zn(2+) is required as a cofactor.

Its subcellular location is the membrane. It catalyses the reaction Release of an unsubstituted, C-terminal glutamyl residue, typically from Ac-Asp-Glu or folylpoly-gamma-glutamates.. This chain is Glutamate carboxypeptidase 2 homolog, found in Caenorhabditis elegans.